Reading from the N-terminus, the 177-residue chain is MRDHVAGRYAKALFDLALEHHVLDQAEADVRTLGEVLHATPELASVLENPSISAEELKQVLQTSFTGFNTIVLNTILVMVENDRASEVLSLPEHFIALLNEHRNVATAIVTSAYKLSDEELTNVKETFGQKSGKTLEVENVVDTNVIGGLRVQIGYTTYDGTIETKLTRLERELLKA.

It belongs to the ATPase delta chain family. F-type ATPases have 2 components, F(1) - the catalytic core - and F(0) - the membrane proton channel. F(1) has five subunits: alpha(3), beta(3), gamma(1), delta(1), epsilon(1). F(0) has three main subunits: a(1), b(2) and c(10-14). The alpha and beta chains form an alternating ring which encloses part of the gamma chain. F(1) is attached to F(0) by a central stalk formed by the gamma and epsilon chains, while a peripheral stalk is formed by the delta and b chains.

It is found in the cell membrane. Its function is as follows. F(1)F(0) ATP synthase produces ATP from ADP in the presence of a proton or sodium gradient. F-type ATPases consist of two structural domains, F(1) containing the extramembraneous catalytic core and F(0) containing the membrane proton channel, linked together by a central stalk and a peripheral stalk. During catalysis, ATP synthesis in the catalytic domain of F(1) is coupled via a rotary mechanism of the central stalk subunits to proton translocation. This protein is part of the stalk that links CF(0) to CF(1). It either transmits conformational changes from CF(0) to CF(1) or is implicated in proton conduction. The protein is ATP synthase subunit delta of Exiguobacterium sibiricum (strain DSM 17290 / CCUG 55495 / CIP 109462 / JCM 13490 / 255-15).